The sequence spans 359 residues: Membrane-bound lytic murein transglycosylase C (359 aa).

The N-terminal stretch at 1–16 (MKKYLALALIAPLLIS) is a signal peptide. The N-palmitoyl cysteine moiety is linked to residue C17. C17 carries S-diacylglycerol cysteine lipidation.

Belongs to the transglycosylase Slt family.

It localises to the cell outer membrane. It catalyses the reaction Exolytic cleavage of the (1-&gt;4)-beta-glycosidic linkage between N-acetylmuramic acid (MurNAc) and N-acetylglucosamine (GlcNAc) residues in peptidoglycan, from either the reducing or the non-reducing ends of the peptidoglycan chains, with concomitant formation of a 1,6-anhydrobond in the MurNAc residue.. Murein-degrading enzyme. May play a role in recycling of muropeptides during cell elongation and/or cell division. This chain is Membrane-bound lytic murein transglycosylase C, found in Escherichia coli O139:H28 (strain E24377A / ETEC).